Consider the following 403-residue polypeptide: Cystinosin homolog (403 aa).

The Lumenal portion of the chain corresponds to 1-122 (MKLPVSILFF…YSRITVIRSH (122 aa)). Residues N45, N52, N78, and N96 are each glycosylated (N-linked (GlcNAc...) asparagine). Residues 123-143 (WLAILIQIVGWTYFAAWSVSF) traverse the membrane as a helical segment. In terms of domain architecture, PQ-loop 1 spans 124-190 (LAILIQIVGW…MYYNSHVKNI (67 aa)). The Cytoplasmic segment spans residues 144–162 (YPQMYLNFKRKSVVGLNFD). The chain crosses the membrane as a helical span at residues 163 to 183 (FLSLNLVGFGAYAMFNLLMYY). The Lumenal segment spans residues 184–206 (NSHVKNIYSMENPRSPPPVLLND). Residues 207-227 (VVFAVHAFLACFVTILQCIFY) form a helical membrane-spanning segment. Residues 228 to 237 (ERDQQRISTK) are Cytoplasmic-facing. The helical transmembrane segment at 238 to 258 (CIILIIGLVSFGFVSVVVTVL) threads the bilayer. Over 259–260 (NK) the chain is Lumenal. The chain crosses the membrane as a helical span at residues 261–283 (ITILDFVVSLSYIKMAVTCCKYF). Residues 266–326 (FVVSLSYIKM…MVLQAINVND (61 aa)) form the PQ-loop 2 domain. The Cytoplasmic portion of the chain corresponds to 284–294 (PQAYFNYQRKS). A helical transmembrane segment spans residues 295–315 (TVGWSIGNILLDFTGGSLDIL). The Lumenal segment spans residues 316–336 (QMVLQAINVNDWSAFYANPVK). The helical transmembrane segment at 337–357 (FGLGFVSIFFDIIFMIQHYAL) threads the bilayer. At 358-403 (YPDAEVPHNEYHGVDNPDPDSIVRDAEHGAADNESMESTDPIIVHD) the chain is on the cytoplasmic side. Residues 374 to 388 (PDPDSIVRDAEHGAA) are compositionally biased toward basic and acidic residues. The tract at residues 374–403 (PDPDSIVRDAEHGAADNESMESTDPIIVHD) is disordered.

Belongs to the cystinosin family.

Its subcellular location is the lysosome membrane. The protein localises to the cytoplasmic vesicle. It localises to the phagosome. It catalyses the reaction L-cystine(out) + H(+)(out) = L-cystine(in) + H(+)(in). Its function is as follows. Cystine/H(+) symporter that mediates export of cystine, the oxidized dimer of cysteine, from lysosomes. May play a role in the degradation of engulfed apoptotic cells. The polypeptide is Cystinosin homolog (ctns-1) (Caenorhabditis briggsae).